Reading from the N-terminus, the 145-residue chain is UPF0299 membrane protein plu1549 (145 aa).

Helical transmembrane passes span 6–26 (VLIVGWQYLRAFVLIYLCLLT), 34–54 (LPIIIPGSIIGMLILFVLLAF), 65–85 (GCSLLLKNMTLLFLPIGVGVM), and 95–115 (IIPIVFSCLISTAIVMIIVAY).

It belongs to the UPF0299 family.

Its subcellular location is the cell inner membrane. The sequence is that of UPF0299 membrane protein plu1549 from Photorhabdus laumondii subsp. laumondii (strain DSM 15139 / CIP 105565 / TT01) (Photorhabdus luminescens subsp. laumondii).